We begin with the raw amino-acid sequence, 185 residues long: uncharacterized protein (185 aa).

The G domain maps to 17-137; sequence GKSSIMNALF…QKPIIVVINK (121 aa).

This is an uncharacterized protein from Methanocaldococcus jannaschii (strain ATCC 43067 / DSM 2661 / JAL-1 / JCM 10045 / NBRC 100440) (Methanococcus jannaschii).